The following is a 115-amino-acid chain: NADH-ubiquinone oxidoreductase chain 3 (115 aa).

The next 3 helical transmembrane spans lie at 4–24, 55–75, and 86–106; these read LTALLINITLSLCLITIAFWL, FFLVAITFLLFDLEIALLLPL, and VMMLTSFILVSVLALGLAYEW.

The protein belongs to the complex I subunit 3 family. As to quaternary structure, core subunit of respiratory chain NADH dehydrogenase (Complex I) which is composed of 45 different subunits. Interacts with TMEM186. Interacts with TMEM242.

It localises to the mitochondrion inner membrane. The enzyme catalyses a ubiquinone + NADH + 5 H(+)(in) = a ubiquinol + NAD(+) + 4 H(+)(out). Functionally, core subunit of the mitochondrial membrane respiratory chain NADH dehydrogenase (Complex I) which catalyzes electron transfer from NADH through the respiratory chain, using ubiquinone as an electron acceptor. Essential for the catalytic activity of complex I. This chain is NADH-ubiquinone oxidoreductase chain 3, found in Isthmomys pirrensis (Mount Pirri Isthmus rat).